Reading from the N-terminus, the 459-residue chain is ATP-dependent protease ATPase subunit HslU (459 aa).

ATP contacts are provided by residues valine 26, glycine 68–glutamate 73, aspartate 271, glutamate 337, and arginine 409.

This sequence belongs to the ClpX chaperone family. HslU subfamily. As to quaternary structure, a double ring-shaped homohexamer of HslV is capped on each side by a ring-shaped HslU homohexamer. The assembly of the HslU/HslV complex is dependent on binding of ATP.

It localises to the cytoplasm. Its function is as follows. ATPase subunit of a proteasome-like degradation complex; this subunit has chaperone activity. The binding of ATP and its subsequent hydrolysis by HslU are essential for unfolding of protein substrates subsequently hydrolyzed by HslV. HslU recognizes the N-terminal part of its protein substrates and unfolds these before they are guided to HslV for hydrolysis. This Xylella fastidiosa (strain M12) protein is ATP-dependent protease ATPase subunit HslU.